Consider the following 335-residue polypeptide: Holliday junction branch migration complex subunit RuvB (335 aa).

A large ATPase domain (RuvB-L) region spans residues 1-181 (MERIIEIEKM…FGMNFWMQFY (181 aa)). ATP is bound by residues leucine 20, arginine 21, glycine 62, lysine 65, threonine 66, threonine 67, 128-130 (EDF), arginine 171, tyrosine 181, and arginine 218. Mg(2+) is bound at residue threonine 66. Residues 182–252 (NIEELSQIIT…QARYALHELG (71 aa)) form a small ATPAse domain (RuvB-S) region. Residues 255-335 (DHGFDDLDLR…LPFEPNATLF (81 aa)) form a head domain (RuvB-H) region. Arginine 309 and arginine 314 together coordinate DNA.

This sequence belongs to the RuvB family. As to quaternary structure, homohexamer. Forms an RuvA(8)-RuvB(12)-Holliday junction (HJ) complex. HJ DNA is sandwiched between 2 RuvA tetramers; dsDNA enters through RuvA and exits via RuvB. An RuvB hexamer assembles on each DNA strand where it exits the tetramer. Each RuvB hexamer is contacted by two RuvA subunits (via domain III) on 2 adjacent RuvB subunits; this complex drives branch migration. In the full resolvosome a probable DNA-RuvA(4)-RuvB(12)-RuvC(2) complex forms which resolves the HJ.

It localises to the cytoplasm. It carries out the reaction ATP + H2O = ADP + phosphate + H(+). Functionally, the RuvA-RuvB-RuvC complex processes Holliday junction (HJ) DNA during genetic recombination and DNA repair, while the RuvA-RuvB complex plays an important role in the rescue of blocked DNA replication forks via replication fork reversal (RFR). RuvA specifically binds to HJ cruciform DNA, conferring on it an open structure. The RuvB hexamer acts as an ATP-dependent pump, pulling dsDNA into and through the RuvAB complex. RuvB forms 2 homohexamers on either side of HJ DNA bound by 1 or 2 RuvA tetramers; 4 subunits per hexamer contact DNA at a time. Coordinated motions by a converter formed by DNA-disengaged RuvB subunits stimulates ATP hydrolysis and nucleotide exchange. Immobilization of the converter enables RuvB to convert the ATP-contained energy into a lever motion, pulling 2 nucleotides of DNA out of the RuvA tetramer per ATP hydrolyzed, thus driving DNA branch migration. The RuvB motors rotate together with the DNA substrate, which together with the progressing nucleotide cycle form the mechanistic basis for DNA recombination by continuous HJ branch migration. Branch migration allows RuvC to scan DNA until it finds its consensus sequence, where it cleaves and resolves cruciform DNA. The polypeptide is Holliday junction branch migration complex subunit RuvB (Wolinella succinogenes (strain ATCC 29543 / DSM 1740 / CCUG 13145 / JCM 31913 / LMG 7466 / NCTC 11488 / FDC 602W) (Vibrio succinogenes)).